Reading from the N-terminus, the 199-residue chain is N-(5'-phosphoribosyl)anthranilate isomerase (199 aa).

It belongs to the TrpF family.

The catalysed reaction is N-(5-phospho-beta-D-ribosyl)anthranilate = 1-(2-carboxyphenylamino)-1-deoxy-D-ribulose 5-phosphate. It functions in the pathway amino-acid biosynthesis; L-tryptophan biosynthesis; L-tryptophan from chorismate: step 3/5. This chain is N-(5'-phosphoribosyl)anthranilate isomerase, found in Streptococcus pneumoniae serotype 19F (strain G54).